The following is a 435-amino-acid chain: Antho-RFamide neuropeptides type 1 (435 aa).

Residues 1–22 form the signal peptide; it reads MTTVSYVTILLTVLVQVLTSDA. Positions 23 to 193 are excised as a propeptide; the sequence is KATNNKRELS…SVPGRYGREL (171 aa). Glutamine 194 bears the Pyrrolidone carboxylic acid mark. Phenylalanine amide is present on phenylalanine 197. Positions 199–201 are excised as a propeptide; it reads REL. Phenylalanine 205 bears the Phenylalanine amide mark. Positions 207–209 are excised as a propeptide; sequence REA. At phenylalanine 213 the chain carries Phenylalanine amide. Residues 215 to 217 constitute a propeptide that is removed on maturation; it reads REL. Phenylalanine 221 is subject to Phenylalanine amide. Positions 223-225 are excised as a propeptide; sequence REF. Phenylalanine 229 carries the post-translational modification Phenylalanine amide. Basic and acidic residues predominate over residues 230-371; it reads GREDQGRFGR…EDIAEADQGR (142 aa). Disordered regions lie at residues 230–374 and 386–435; these read GRED…RFGR and AKKR…AKTS. The propeptide occupies 231–233; the sequence is RED. Phenylalanine 237 carries the phenylalanine amide modification. The propeptide occupies 239–241; that stretch reads RED. A Phenylalanine amide modification is found at phenylalanine 245. Positions 247 to 249 are excised as a propeptide; that stretch reads RED. Phenylalanine 253 carries the post-translational modification Phenylalanine amide. The propeptide occupies 255–257; the sequence is RED. The residue at position 261 (phenylalanine 261) is a Phenylalanine amide. The propeptide occupies 263-265; that stretch reads RED. Residue phenylalanine 269 is modified to Phenylalanine amide. The propeptide occupies 271-273; sequence RED. At phenylalanine 277 the chain carries Phenylalanine amide. Residues 279–281 constitute a propeptide that is removed on maturation; that stretch reads REL. Phenylalanine 285 is subject to Phenylalanine amide. A propeptide spanning residues 287-289 is cleaved from the precursor; sequence REF. Position 293 is a phenylalanine amide (phenylalanine 293). Residues 295 to 297 constitute a propeptide that is removed on maturation; it reads RED. Phenylalanine 301 bears the Phenylalanine amide mark. Positions 303 to 305 are excised as a propeptide; sequence RED. Residue phenylalanine 309 is modified to Phenylalanine amide. Residues 311-313 constitute a propeptide that is removed on maturation; it reads REL. Phenylalanine 317 carries the post-translational modification Phenylalanine amide. Residues 319-321 constitute a propeptide that is removed on maturation; the sequence is RED. Phenylalanine 325 bears the Phenylalanine amide mark. The propeptide occupies 327-329; it reads RED. A Phenylalanine amide modification is found at phenylalanine 333. A propeptide spanning residues 335-342 is cleaved from the precursor; it reads REDLAKED. Phenylalanine 346 carries the post-translational modification Phenylalanine amide. Positions 348-355 are excised as a propeptide; sequence REDLAKED. Phenylalanine 359 is subject to Phenylalanine amide. A propeptide spanning residues 361-368 is cleaved from the precursor; that stretch reads REDIAEAD. Phenylalanine 372 bears the Phenylalanine amide mark. Residues 374 to 435 constitute a propeptide that is removed on maturation; the sequence is RNAAAAAAAA…KSDDALAKTS (62 aa). Over residues 398 to 435 the composition is skewed to basic and acidic residues; sequence SDPKPQTRFRDGKDMQEKRKVEKKDKIEKSDDALAKTS.

It belongs to the FARP (FMRFamide related peptide) family.

The protein localises to the secreted. Its function is as follows. Not known but it could act as a transmitter at neuromuscular synapses. The polypeptide is Antho-RFamide neuropeptides type 1 (Anthopleura elegantissima (Green aggregating anemone)).